Here is an 875-residue protein sequence, read N- to C-terminus: uncharacterized protein (875 aa).

Residues 83 to 149 (PFQPPPPQPF…QPPQPPPQQL (67 aa)) are disordered. The segment covering 101–147 (QQPPQPPPDQPQQPQPPQQPPQQPPQQQPQPPQPPQQPPQPPQPPPQ) has biased composition (pro residues).

This is an uncharacterized protein from Orgyia pseudotsugata multicapsid polyhedrosis virus (OpMNPV).